The primary structure comprises 730 residues: Nitrogen fixation protein FixI (730 aa).

Residues 1–101 (MHVTRDFSHY…AEVAEVAESR (101 aa)) lie on the Cytoplasmic side of the membrane. Residues 19–85 (KHIDLAVEGV…RLEELGYKAY (67 aa)) enclose the HMA domain. 2 residues coordinate a metal cation: Cys-30 and Cys-33. Residues 102-123 (FLLRCLGVAAFATMNVMMLSIP) traverse the membrane as a helical segment. Residues 124–138 (VWSGNVSDMLPEQRD) lie on the Extracellular side of the membrane. The helical transmembrane segment at 139–162 (FFHWLSALIALPAAAYAGQPFFRS) threads the bilayer. Topologically, residues 163–168 (AWRALS) are cytoplasmic. The chain crosses the membrane as a helical span at residues 169–190 (AKTTNMDVPISIGVILALGMSV). At 191 to 202 (VETIHHAEHAYF) the chain is on the extracellular side. Residues 203 to 223 (DAAIMLLTFLLVGRFLDQNMR) form a helical membrane-spanning segment. The Cytoplasmic segment spans residues 224–352 (RRTRAVAGNL…RSRYMRLADR (129 aa)). Residues 353 to 375 (ASRLYAPVVHATALITILGWVIA) traverse the membrane as a helical segment. At 376–382 (GASWHDA) the chain is on the extracellular side. A helical transmembrane segment spans residues 383–400 (IVTGVAVLIITCPCALGL). Residues 401-676 (AIPTVQTVAS…DSARKALHLM (276 aa)) are Cytoplasmic-facing. Residue Asp-438 is the 4-aspartylphosphate intermediate of the active site. Mg(2+) contacts are provided by Asp-622 and Asp-626. The helical transmembrane segment at 677–696 (RQNLWLAIGYNVLAVPVAIS) threads the bilayer. Residues 697–701 (GVVTP) are Extracellular-facing. A helical membrane pass occupies residues 702-720 (LIAAAAMSGSSILVMLNSL). Over 721 to 730 (RARSDSREIV) the chain is Cytoplasmic.

Belongs to the cation transport ATPase (P-type) (TC 3.A.3) family. Type IB subfamily.

It is found in the cell membrane. It carries out the reaction ATP + H2O = ADP + phosphate + H(+). Its function is as follows. FixI is a pump of a specific cation involved in symbiotic nitrogen fixation. The four proteins FixG, FixH, FixI, and FixS may participate in a membrane-bound complex coupling the FixI cation pump with a redox process catalyzed by FixG. The chain is Nitrogen fixation protein FixI (fixI) from Bradyrhizobium diazoefficiens (strain JCM 10833 / BCRC 13528 / IAM 13628 / NBRC 14792 / USDA 110).